The chain runs to 261 residues: Esterase citA (261 aa).

Active-site charge relay system residues include S122, D207, and H235.

Belongs to the LovG family.

Its pathway is mycotoxin biosynthesis. Non-reducing polyketide synthase; part of the gene cluster that mediates the biosynthesis of the mycotoxin citrinin, a hepato-nephrotoxic compound to humans due to inhibition of respiration complex III. The pathway begins with the synthesis of a keto-aldehyde intermediate by the citrinin PKS (pksCT also named citS) from successive condensations of 4 malonyl-CoA units, presumably with a simple acetyl-CoA starter unit. Release of the keto-aldehyde intermediate is consistent with the presence of the C-terminal reductive release domain. CitA collaborates with citS by catalyzing the hydrolysis of ACP-bound acyl intermediates to free the ACP from stalled intermediates. CitB then catalyzes the oxidation of the C-12 methyl of the ketone intermediate to an alcohol intermediate which is further oxidized by the oxidoreductase citC to produce a bisaldehyde intermediate. The fourth catalytic step is catalyzed by the citD aldehyde dehydrogenase. The final transformation is the reduction of C-3 by citE to provide the chemically stable citrinin nucleus. CitE appears highly selective for its substrate as its presence in any context other than a full complement of citS and citA-D does not result in observable new compounds. The protein is Esterase citA of Monascus ruber (Mold).